A 276-amino-acid chain; its full sequence is MRNIGIIINKEKDKENEILNLVILKVKEYLNPDEIKVIDQFYKGDYKDLMALDLLIVLGGDGTLLGVARKFSTVIDTPILGINIGNLGFLVTAEISELDEALYRIKVGDYKVEERMLLSCTIEGVTCSEERALNDIVVARGTLSRMAQYEVFINDELYATFKGDGVIISTPVGSTAYSFSAGGPLIMPDLQIVSIVPICPHTPNSRPMIIDGNNKVRVKPLINESDVFVTIDGQKALKLEKHNEVLIKKAKEFFRIISFDNKSYFKVLRKKLFKIE.

The active-site Proton acceptor is the Asp-61. Residues 61–62 (DG), 134–135 (ND), Arg-145, Lys-162, Asp-164, Val-172, 175–180 (TAYSFS), and Gln-234 contribute to the NAD(+) site.

It belongs to the NAD kinase family. The cofactor is a divalent metal cation.

Its subcellular location is the cytoplasm. The enzyme catalyses NAD(+) + ATP = ADP + NADP(+) + H(+). In terms of biological role, involved in the regulation of the intracellular balance of NAD and NADP, and is a key enzyme in the biosynthesis of NADP. Catalyzes specifically the phosphorylation on 2'-hydroxyl of the adenosine moiety of NAD to yield NADP. This Clostridium perfringens (strain ATCC 13124 / DSM 756 / JCM 1290 / NCIMB 6125 / NCTC 8237 / Type A) protein is NAD kinase.